Consider the following 607-residue polypeptide: Actin-related protein 5 (607 aa).

Lys-283 is covalently cross-linked (Glycyl lysine isopeptide (Lys-Gly) (interchain with G-Cter in SUMO2)). Coiled-coil stretches lie at residues 288-327 (TLTSEEKQERRQQQLRRLQELNARRREEKLQLDQERLDRL) and 355-384 (EELQSYIQKLSIAVEQAKQKILQAEVNLEV). Residues 584–596 (SRSSDAQASSKGS) are compositionally biased toward low complexity. The interval 584–607 (SRSSDAQASSKGSAAGGGGAGEQA) is disordered. Residues 597 to 607 (AAGGGGAGEQA) are compositionally biased toward gly residues.

Belongs to the actin family. ARP5 subfamily. In terms of assembly, component of the chromatin remodeling INO80 complex; specifically part of a complex module associated with the helicase ATP-binding and the helicase C-terminal domain of INO80. Interacts with DDB1. Interacts with ACTR8; the interaction is observed in asynchronous (interphase) cells but not in metaphase-arrested cells indicative for a possible dissociation of the INO80 complex in mitotic cells.

It is found in the nucleus. The protein localises to the cytoplasm. Its function is as follows. Proposed core component of the chromatin remodeling INO80 complex which is involved in transcriptional regulation, DNA replication and probably DNA repair. Involved in DNA double-strand break repair and UV-damage excision repair. This is Actin-related protein 5 (ACTR5) from Homo sapiens (Human).